We begin with the raw amino-acid sequence, 270 residues long: Acyl-[acyl-carrier-protein]--UDP-N-acetylglucosamine O-acyltransferase (270 aa).

Belongs to the transferase hexapeptide repeat family. LpxA subfamily. Homotrimer.

It is found in the cytoplasm. The enzyme catalyses a (3R)-hydroxyacyl-[ACP] + UDP-N-acetyl-alpha-D-glucosamine = a UDP-3-O-[(3R)-3-hydroxyacyl]-N-acetyl-alpha-D-glucosamine + holo-[ACP]. It functions in the pathway glycolipid biosynthesis; lipid IV(A) biosynthesis; lipid IV(A) from (3R)-3-hydroxytetradecanoyl-[acyl-carrier-protein] and UDP-N-acetyl-alpha-D-glucosamine: step 1/6. In terms of biological role, involved in the biosynthesis of lipid A, a phosphorylated glycolipid that anchors the lipopolysaccharide to the outer membrane of the cell. The chain is Acyl-[acyl-carrier-protein]--UDP-N-acetylglucosamine O-acyltransferase from Helicobacter pylori (strain P12).